We begin with the raw amino-acid sequence, 184 residues long: NADH-quinone oxidoreductase subunit B (184 aa).

[4Fe-4S] cluster is bound by residues Cys37, Cys38, Cys103, and Cys132.

The protein belongs to the complex I 20 kDa subunit family. In terms of assembly, NDH-1 is composed of 14 different subunits. Subunits NuoB, C, D, E, F, and G constitute the peripheral sector of the complex. The cofactor is [4Fe-4S] cluster.

It localises to the cell membrane. The catalysed reaction is a quinone + NADH + 5 H(+)(in) = a quinol + NAD(+) + 4 H(+)(out). Functionally, NDH-1 shuttles electrons from NADH, via FMN and iron-sulfur (Fe-S) centers, to quinones in the respiratory chain. The immediate electron acceptor for the enzyme in this species is believed to be a menaquinone. Couples the redox reaction to proton translocation (for every two electrons transferred, four hydrogen ions are translocated across the cytoplasmic membrane), and thus conserves the redox energy in a proton gradient. This chain is NADH-quinone oxidoreductase subunit B, found in Beutenbergia cavernae (strain ATCC BAA-8 / DSM 12333 / CCUG 43141 / JCM 11478 / NBRC 16432 / NCIMB 13614 / HKI 0122).